A 66-amino-acid polypeptide reads, in one-letter code: Large ribosomal subunit protein bL33c (66 aa).

The protein belongs to the bacterial ribosomal protein bL33 family.

The protein resides in the plastid. The protein localises to the chloroplast. The chain is Large ribosomal subunit protein bL33c from Chloranthus spicatus (Chulantree).